The following is a 425-amino-acid chain: uncharacterized protein (425 aa).

This is an uncharacterized protein from Acidianus sp. F28 (AFV-2).